The following is a 43-amino-acid chain: Protein PsbN (43 aa).

Residues 7–27 traverse the membrane as a helical segment; the sequence is VTIFISGLLVSFTGYALYIAF.

Belongs to the PsbN family.

It localises to the plastid. Its subcellular location is the chloroplast thylakoid membrane. May play a role in photosystem I and II biogenesis. The polypeptide is Protein PsbN (Dioscorea bulbifera (Air potato)).